The following is a 684-amino-acid chain: Chaperone protein HtpG (684 aa).

An a; substrate-binding region spans residues Met1–Arg329. The b stretch occupies residues Ser330–Gln548. A c region spans residues Leu549–Leu684.

Belongs to the heat shock protein 90 family. Homodimer.

The protein resides in the cytoplasm. Functionally, molecular chaperone. Has ATPase activity. The sequence is that of Chaperone protein HtpG from Porphyromonas gingivalis (strain ATCC BAA-308 / W83).